A 227-amino-acid chain; its full sequence is uncharacterized protein (227 aa).

Residues 7 to 26 (IITLTILIFISGLLTAFLLL) traverse the membrane as a helical segment.

The protein localises to the membrane. This is an uncharacterized protein from Haemophilus influenzae (strain ATCC 51907 / DSM 11121 / KW20 / Rd).